The chain runs to 453 residues: Bifunctional protein GlmU (453 aa).

Positions 1-226 are pyrophosphorylase; it reads MAFSVVILAA…EIEVEGINNR (226 aa). Residues 8-11, Lys-22, Gln-73, and 78-79 each bind UDP-N-acetyl-alpha-D-glucosamine; these read LAAG and GT. Asp-102 contacts Mg(2+). The UDP-N-acetyl-alpha-D-glucosamine site is built by Gly-137, Glu-151, Asn-166, and Asn-224. Asn-224 contributes to the Mg(2+) binding site. The tract at residues 227–247 is linker; it reads KQLAAIERAFQFEQAQELMMQ. Residues 248–453 are N-acetyltransferase; sequence GVSLLDPHRF…SGWQRPTKPE (206 aa). 2 residues coordinate UDP-N-acetyl-alpha-D-glucosamine: Arg-330 and Lys-348. His-360 functions as the Proton acceptor in the catalytic mechanism. Tyr-363 and Asn-374 together coordinate UDP-N-acetyl-alpha-D-glucosamine. Residues Ala-377, 383–384, Ser-402, Ala-420, and Arg-437 each bind acetyl-CoA; that span reads NY.

The protein in the N-terminal section; belongs to the N-acetylglucosamine-1-phosphate uridyltransferase family. In the C-terminal section; belongs to the transferase hexapeptide repeat family. Homotrimer. Mg(2+) serves as cofactor.

It localises to the cytoplasm. The enzyme catalyses alpha-D-glucosamine 1-phosphate + acetyl-CoA = N-acetyl-alpha-D-glucosamine 1-phosphate + CoA + H(+). It carries out the reaction N-acetyl-alpha-D-glucosamine 1-phosphate + UTP + H(+) = UDP-N-acetyl-alpha-D-glucosamine + diphosphate. The protein operates within nucleotide-sugar biosynthesis; UDP-N-acetyl-alpha-D-glucosamine biosynthesis; N-acetyl-alpha-D-glucosamine 1-phosphate from alpha-D-glucosamine 6-phosphate (route II): step 2/2. It participates in nucleotide-sugar biosynthesis; UDP-N-acetyl-alpha-D-glucosamine biosynthesis; UDP-N-acetyl-alpha-D-glucosamine from N-acetyl-alpha-D-glucosamine 1-phosphate: step 1/1. It functions in the pathway bacterial outer membrane biogenesis; LPS lipid A biosynthesis. Functionally, catalyzes the last two sequential reactions in the de novo biosynthetic pathway for UDP-N-acetylglucosamine (UDP-GlcNAc). The C-terminal domain catalyzes the transfer of acetyl group from acetyl coenzyme A to glucosamine-1-phosphate (GlcN-1-P) to produce N-acetylglucosamine-1-phosphate (GlcNAc-1-P), which is converted into UDP-GlcNAc by the transfer of uridine 5-monophosphate (from uridine 5-triphosphate), a reaction catalyzed by the N-terminal domain. This Pseudoalteromonas atlantica (strain T6c / ATCC BAA-1087) protein is Bifunctional protein GlmU.